Reading from the N-terminus, the 726-residue chain is Probable pre-mRNA-splicing factor ATP-dependent RNA helicase DEAH2 (726 aa).

One can recognise a Helicase ATP-binding domain in the interval 71–240; that stretch reads LKTLNNNQTL…FSGAPLMKVP (170 aa). 84–91 is an ATP binding site; that stretch reads GETGSGKT. A DEAH box motif is present at residues 187–190; it reads DEAH. A Helicase C-terminal domain is found at 265–445; sequence TVVQIHMCEP…NTVLTLKKLG (181 aa).

This sequence belongs to the DEAD box helicase family. DEAH subfamily. PRP43 sub-subfamily.

The catalysed reaction is ATP + H2O = ADP + phosphate + H(+). Its function is as follows. May be involved in pre-mRNA splicing. In Arabidopsis thaliana (Mouse-ear cress), this protein is Probable pre-mRNA-splicing factor ATP-dependent RNA helicase DEAH2.